We begin with the raw amino-acid sequence, 434 residues long: ATP-dependent protease ATPase subunit HslU (434 aa).

Residues V18, 60–65 (GVGKTE), D247, E312, and R384 each bind ATP.

This sequence belongs to the ClpX chaperone family. HslU subfamily. In terms of assembly, a double ring-shaped homohexamer of HslV is capped on each side by a ring-shaped HslU homohexamer. The assembly of the HslU/HslV complex is dependent on binding of ATP.

It localises to the cytoplasm. In terms of biological role, ATPase subunit of a proteasome-like degradation complex; this subunit has chaperone activity. The binding of ATP and its subsequent hydrolysis by HslU are essential for unfolding of protein substrates subsequently hydrolyzed by HslV. HslU recognizes the N-terminal part of its protein substrates and unfolds these before they are guided to HslV for hydrolysis. The protein is ATP-dependent protease ATPase subunit HslU of Rhodopseudomonas palustris (strain BisB18).